Reading from the N-terminus, the 237-residue chain is Orotidine 5'-phosphate decarboxylase (237 aa).

Residues Asp-17, Lys-39, 66–75 (DLKLHDIGNT), Thr-121, Arg-182, Gln-191, Gly-211, and Arg-212 contribute to the substrate site. The active-site Proton donor is the Lys-68.

The protein belongs to the OMP decarboxylase family. Type 1 subfamily. Homodimer.

The catalysed reaction is orotidine 5'-phosphate + H(+) = UMP + CO2. The protein operates within pyrimidine metabolism; UMP biosynthesis via de novo pathway; UMP from orotate: step 2/2. Its function is as follows. Catalyzes the decarboxylation of orotidine 5'-monophosphate (OMP) to uridine 5'-monophosphate (UMP). In Rhodopseudomonas palustris (strain ATCC BAA-98 / CGA009), this protein is Orotidine 5'-phosphate decarboxylase.